We begin with the raw amino-acid sequence, 185 residues long: Capsid protein (185 aa).

The disordered stretch occupies residues 136–185 (NAPILSTLPETTVVRRRDRGRSPRRRTPSPRRRRSQSPRRRRSQSRESQC). A compositionally biased stretch (basic residues) spans 149 to 178 (VRRRDRGRSPRRRTPSPRRRRSQSPRRRRS). Serine 157, serine 164, and serine 172 each carry phosphoserine; by host. A 1; half-length repeat occupies 157-163 (SPRRRTP). The interval 157–179 (SPRRRTPSPRRRRSQSPRRRRSQ) is 3 X 8 AA repeats of S-P-R-R-R-[PR]-S-Q. A Bipartite nuclear localization signal motif is present at residues 160–177 (RRTPSPRRRRSQSPRRRR). A run of 2 repeats spans residues 164 to 171 (SPRRRRSQ) and 172 to 179 (SPRRRRSQ). The interval 179 to 185 (QSRESQC) is RNA binding.

It belongs to the orthohepadnavirus core antigen family. As to quaternary structure, homodimerizes, then multimerizes. Interacts with cytosol exposed regions of viral L glycoprotein present in the reticulum-to-Golgi compartment. Interacts with human FLNB. Phosphorylated form interacts with host importin alpha; this interaction depends on the exposure of the NLS, which itself depends upon genome maturation and/or phosphorylation of the capsid protein. Interacts with host NUP153. Post-translationally, phosphorylated by host SRPK1, SRPK2, and maybe protein kinase C or GAPDH. Phosphorylation is critical for pregenomic RNA packaging. Protein kinase C phosphorylation is stimulated by HBx protein and may play a role in transport of the viral genome to the nucleus at the late step during the viral replication cycle.

It is found in the virion. Its subcellular location is the host cytoplasm. In terms of biological role, self assembles to form an icosahedral capsid. Most capsids appear to be large particles with an icosahedral symmetry of T=4 and consist of 240 copies of capsid protein, though a fraction forms smaller T=3 particles consisting of 180 capsid proteins. Entering capsids are transported along microtubules to the nucleus. Phosphorylation of the capsid is thought to induce exposure of nuclear localization signal in the C-terminal portion of the capsid protein that allows binding to the nuclear pore complex via the importin (karyopherin-) alpha and beta. Capsids are imported in intact form through the nuclear pore into the nuclear basket, where it probably binds NUP153. Only capsids that contain the mature viral genome can release the viral DNA and capsid protein into the nucleoplasm. Immature capsids get stuck in the basket. Capsids encapsulate the pre-genomic RNA and the P protein. Pre-genomic RNA is reverse-transcribed into DNA while the capsid is still in the cytoplasm. The capsid can then either be directed to the nucleus, providing more genomes for transcription, or bud through the endoplasmic reticulum to provide new virions. This chain is Capsid protein, found in Homo sapiens (Human).